A 105-amino-acid chain; its full sequence is Endogenous retrovirus group K member 6 Rec protein (105 aa).

The tract at residues 1–49 is disordered; the sequence is MNPSEMQRKAPPRRRRHRNRAPLTHKMNKMVTSEEQMKLPSTKKAEPPT. Residues 10–20 show a composition bias toward basic residues; it reads APPRRRRHRNR. Residues 13–20 carry the Nuclear localization signal motif; it reads RRRRHRNR. Residues 50-59 carry the Nuclear export signal motif; the sequence is WAQLKKLTQL.

Forms homodimers, homotrimers, and homotetramers via a C-terminal domain. Associates with XPO1 and with ZNF145. Expressed at higher level in placenta, expressed at lower level in several organs and cell lines.

It is found in the cytoplasm. Its subcellular location is the nucleus. The protein localises to the nucleolus. Retroviral replication requires the nuclear export and translation of unspliced, singly-spliced and multiply-spliced derivatives of the initial genomic transcript. Rec interacts with a highly structured RNA element (RcRE) present in the viral 3'LTR and recruits the cellular nuclear export machinery. This permits export to the cytoplasm of unspliced genomic or incompletely spliced subgenomic viral transcripts. The chain is Endogenous retrovirus group K member 6 Rec protein (ERVK-6) from Homo sapiens (Human).